Here is a 447-residue protein sequence, read N- to C-terminus: Probable glycine dehydrogenase (decarboxylating) subunit 1 (447 aa).

It belongs to the GcvP family. N-terminal subunit subfamily. In terms of assembly, the glycine cleavage system is composed of four proteins: P, T, L and H. In this organism, the P 'protein' is a heterodimer of two subunits.

It catalyses the reaction N(6)-[(R)-lipoyl]-L-lysyl-[glycine-cleavage complex H protein] + glycine + H(+) = N(6)-[(R)-S(8)-aminomethyldihydrolipoyl]-L-lysyl-[glycine-cleavage complex H protein] + CO2. Functionally, the glycine cleavage system catalyzes the degradation of glycine. The P protein binds the alpha-amino group of glycine through its pyridoxal phosphate cofactor; CO(2) is released and the remaining methylamine moiety is then transferred to the lipoamide cofactor of the H protein. The polypeptide is Probable glycine dehydrogenase (decarboxylating) subunit 1 (Sulfolobus acidocaldarius (strain ATCC 33909 / DSM 639 / JCM 8929 / NBRC 15157 / NCIMB 11770)).